A 236-amino-acid chain; its full sequence is Phosphoribosylaminoimidazole-succinocarboxamide synthase (236 aa).

Belongs to the SAICAR synthetase family.

The catalysed reaction is 5-amino-1-(5-phospho-D-ribosyl)imidazole-4-carboxylate + L-aspartate + ATP = (2S)-2-[5-amino-1-(5-phospho-beta-D-ribosyl)imidazole-4-carboxamido]succinate + ADP + phosphate + 2 H(+). The protein operates within purine metabolism; IMP biosynthesis via de novo pathway; 5-amino-1-(5-phospho-D-ribosyl)imidazole-4-carboxamide from 5-amino-1-(5-phospho-D-ribosyl)imidazole-4-carboxylate: step 1/2. This chain is Phosphoribosylaminoimidazole-succinocarboxamide synthase (purC), found in Lactococcus lactis subsp. lactis (strain IL1403) (Streptococcus lactis).